Consider the following 292-residue polypeptide: Syntaxin-19 (292 aa).

The t-SNARE coiled-coil homology domain maps to 207 to 269 (LSEIEQRHKE…NNTKEKFGLA (63 aa)).

This sequence belongs to the syntaxin family. As to quaternary structure, interacts with EGFR. In terms of tissue distribution, expressed in stomach, lung and skin (at protein level). In stomach, strongly expressed in the mucosa of the fundus, in epithelial cells of gastric pits, and in gastric glands (at protein level). In skin, expressed in the epidermis, dermis, and epithelial layer of the hair bulb (at protein level).

It localises to the cell membrane. The protein resides in the cytoplasm. In terms of biological role, plays a role in endosomal trafficking of the epidermal growth factor receptor (EGFR). This chain is Syntaxin-19, found in Mus musculus (Mouse).